We begin with the raw amino-acid sequence, 478 residues long: Alpha,alpha-trehalose-phosphate synthase [UDP-forming] (478 aa).

Tyrosine 89 and aspartate 143 together coordinate D-glucose 6-phosphate. Positions 280 and 285 each coordinate UDP. 2 residues coordinate UDP-alpha-D-glucose: arginine 280 and lysine 285. Arginine 318 lines the D-glucose 6-phosphate pocket. UDP is bound by residues isoleucine 357 and leucine 383 to glutamate 387. Residues isoleucine 357 and aspartate 379–glutamate 387 each bind UDP-alpha-D-glucose.

The protein belongs to the glycosyltransferase 20 family.

The catalysed reaction is D-glucose 6-phosphate + UDP-alpha-D-glucose = alpha,alpha-trehalose 6-phosphate + UDP + H(+). Its pathway is carbohydrate biosynthesis. Inhibited by validoxylamine A, a non-reactive trehalose analog. Its function is as follows. Synthase catalytic subunit of the trehalose synthase complex that catalyzes the production of trehalose from glucose-6-phosphate and UDP-alpha-D-glucose in a two step process. The polypeptide is Alpha,alpha-trehalose-phosphate synthase [UDP-forming] (Candida albicans (strain SC5314 / ATCC MYA-2876) (Yeast)).